The primary structure comprises 288 residues: 33 kDa chaperonin (288 aa).

2 disulfide bridges follow: cysteine 233–cysteine 235 and cysteine 267–cysteine 270.

It belongs to the HSP33 family. Under oxidizing conditions two disulfide bonds are formed involving the reactive cysteines. Under reducing conditions zinc is bound to the reactive cysteines and the protein is inactive.

Its subcellular location is the cytoplasm. Redox regulated molecular chaperone. Protects both thermally unfolding and oxidatively damaged proteins from irreversible aggregation. Plays an important role in the bacterial defense system toward oxidative stress. The sequence is that of 33 kDa chaperonin from Pasteurella multocida (strain Pm70).